Reading from the N-terminus, the 803-residue chain is Leucine--tRNA ligase (803 aa).

A 'HIGH' region motif is present at residues 40–51; that stretch reads PYPSGQGLHVGH. Residues 575 to 579 carry the 'KMSKS' region motif; it reads KMSKS. Lysine 578 contributes to the ATP binding site.

This sequence belongs to the class-I aminoacyl-tRNA synthetase family.

It is found in the cytoplasm. It carries out the reaction tRNA(Leu) + L-leucine + ATP = L-leucyl-tRNA(Leu) + AMP + diphosphate. In Lacticaseibacillus paracasei (strain ATCC 334 / BCRC 17002 / CCUG 31169 / CIP 107868 / KCTC 3260 / NRRL B-441) (Lactobacillus paracasei), this protein is Leucine--tRNA ligase.